A 415-amino-acid chain; its full sequence is MIITDIYAQEVLDSRGNPTVRAFVALEDGTLAGATVPSGASTGKREALELRDGDERFCGKGVLKAVENVNTVIADEIVGMNVYEQKDIDNAMKKLDGTENYSNLGANAVLGVSMAVARAAAMSLGIPLYRYLGGANAQILPVPMFNIINGGAHANNSVDFQEFMVMPFGFDCFSDALRAVAEIYQNLKKILNELGYSTAVGDEGGFAPNLKDNEEPIKIIMQAIKKAGYEPGKQIKIALDVAASELYENGKYRLEGKTFTSEELIERYVKLCEKYPIFSIEDGLGEDDWEGWKKLTARLKDKIQLVGDDLFVTNEKILREGIEKGIANAILIKPNQIGSITQTMQTVRLAQRNGYRCIMSHRSGESEDSFIADFAVALNTGEIKTGATSRSERNAKYNRLLEIECENTEFLGNKI.

Gln161 contacts (2R)-2-phosphoglycerate. Residue Glu203 is the Proton donor of the active site. Residues Asp240, Glu281, and Asp308 each contribute to the Mg(2+) site. (2R)-2-phosphoglycerate is bound by residues Lys333, Arg362, Ser363, and Lys384. Lys333 functions as the Proton acceptor in the catalytic mechanism.

Belongs to the enolase family. Mg(2+) serves as cofactor.

It localises to the cytoplasm. Its subcellular location is the secreted. The protein resides in the cell surface. The enzyme catalyses (2R)-2-phosphoglycerate = phosphoenolpyruvate + H2O. It functions in the pathway carbohydrate degradation; glycolysis; pyruvate from D-glyceraldehyde 3-phosphate: step 4/5. Catalyzes the reversible conversion of 2-phosphoglycerate (2-PG) into phosphoenolpyruvate (PEP). It is essential for the degradation of carbohydrates via glycolysis. This is Enolase from Campylobacter hominis (strain ATCC BAA-381 / DSM 21671 / CCUG 45161 / LMG 19568 / NCTC 13146 / CH001A).